The chain runs to 281 residues: Diaminopimelate epimerase (281 aa).

Asn14 and Asn65 together coordinate substrate. The Proton donor role is filled by Cys74. Residues 75-76, Asn165, Asn198, and 216-217 contribute to the substrate site; these read GN and ER. Cys225 acts as the Proton acceptor in catalysis. 226-227 provides a ligand contact to substrate; it reads GT.

It belongs to the diaminopimelate epimerase family. As to quaternary structure, homodimer.

It localises to the cytoplasm. It carries out the reaction (2S,6S)-2,6-diaminopimelate = meso-2,6-diaminopimelate. It functions in the pathway amino-acid biosynthesis; L-lysine biosynthesis via DAP pathway; DL-2,6-diaminopimelate from LL-2,6-diaminopimelate: step 1/1. In terms of biological role, catalyzes the stereoinversion of LL-2,6-diaminopimelate (L,L-DAP) to meso-diaminopimelate (meso-DAP), a precursor of L-lysine and an essential component of the bacterial peptidoglycan. The sequence is that of Diaminopimelate epimerase from Leptospira interrogans serogroup Icterohaemorrhagiae serovar copenhageni (strain Fiocruz L1-130).